The following is a 369-amino-acid chain: Glycerol-3-phosphate dehydrogenase [NAD(P)+] (369 aa).

Residues serine 6, tryptophan 7, arginine 27, arginine 28, and lysine 101 each coordinate NADPH. Sn-glycerol 3-phosphate contacts are provided by lysine 101 and glycine 131. Residue alanine 135 coordinates NADPH. Lysine 186, aspartate 239, serine 249, arginine 250, and asparagine 251 together coordinate sn-glycerol 3-phosphate. Lysine 186 serves as the catalytic Proton acceptor. Arginine 250 serves as a coordination point for NADPH. Glutamate 276 contacts NADPH. Residues 312–369 (KDIAPHLTTDDEPQGERTRGERTTDDGQGQGRTSVWGSLKRAFDQLRDGGGSSRRDRP) form a disordered region. Basic and acidic residues-rich tracts occupy residues 325–336 (QGERTRGERTTD) and 352–369 (RAFD…RDRP).

This sequence belongs to the NAD-dependent glycerol-3-phosphate dehydrogenase family.

It localises to the cytoplasm. The catalysed reaction is sn-glycerol 3-phosphate + NAD(+) = dihydroxyacetone phosphate + NADH + H(+). It catalyses the reaction sn-glycerol 3-phosphate + NADP(+) = dihydroxyacetone phosphate + NADPH + H(+). It functions in the pathway membrane lipid metabolism; glycerophospholipid metabolism. In terms of biological role, catalyzes the reduction of the glycolytic intermediate dihydroxyacetone phosphate (DHAP) to sn-glycerol 3-phosphate (G3P), the key precursor for phospholipid synthesis. This is Glycerol-3-phosphate dehydrogenase [NAD(P)+] from Leifsonia xyli subsp. xyli (strain CTCB07).